A 544-amino-acid polypeptide reads, in one-letter code: Membrane protein insertase YidC (544 aa).

Residues 6–26 (NILLIGLLFVSFLLWQQWQAD) traverse the membrane as a helical segment. Residues 34-58 (AAQTQSSIPASTVADSHSSDVPDAD) form a disordered region. Over residues 39–49 (SSIPASTVADS) the composition is skewed to polar residues. 4 helical membrane passes run 345 to 365 (LLMF…LITL), 423 to 443 (GGCL…WVLL), 460 to 480 (LSVQ…MFVM), and 503 to 523 (VIFT…WLVG).

The protein belongs to the OXA1/ALB3/YidC family. Type 1 subfamily. In terms of assembly, interacts with the Sec translocase complex via SecD. Specifically interacts with transmembrane segments of nascent integral membrane proteins during membrane integration.

It localises to the cell inner membrane. Functionally, required for the insertion and/or proper folding and/or complex formation of integral membrane proteins into the membrane. Involved in integration of membrane proteins that insert both dependently and independently of the Sec translocase complex, as well as at least some lipoproteins. Aids folding of multispanning membrane proteins. The protein is Membrane protein insertase YidC of Shewanella halifaxensis (strain HAW-EB4).